The following is a 210-amino-acid chain: 3-hexulose-6-phosphate synthase (210 aa).

Belongs to the HPS/KGPDC family. HPS subfamily.

The catalysed reaction is D-ribulose 5-phosphate + formaldehyde = D-arabino-hex-3-ulose 6-phosphate. The protein operates within one-carbon metabolism; formaldehyde assimilation via RuMP pathway; D-fructose 6-phosphate from D-ribulose 5-phosphate and formaldehyde: step 1/2. Functionally, catalyzes the condensation of ribulose 5-phosphate with formaldehyde to form 3-hexulose 6-phosphate. In Staphylococcus haemolyticus (strain JCSC1435), this protein is 3-hexulose-6-phosphate synthase.